We begin with the raw amino-acid sequence, 229 residues long: uncharacterized protein (229 aa).

The PilZ domain maps to 102-217; sequence RRRTVRVEPD…REKVRRYVFE (116 aa).

To A.aeolicus aq_820 and aq_1211.

This is an uncharacterized protein from Aquifex aeolicus (strain VF5).